The sequence spans 454 residues: MAAEGKAIAKVNDLVIFVPYVVPGDVVDLQIKRKKNKYAEAEAVKFHELSPVRAVPFCQHYGVCGGCKWQVLPYSEQIRYKQKQVEDNLRRIGKIELPEISPILGSAKTEFYRNKLEFTFSNKRWLTNDEVRQDVKYDQMNAVGFHIPGAFDKVLAIEKCWLQDDISNRIRNAVRDYAYEHDYSFINLRTQEGMLRNLIIRTSSTGELMVIVICKITEDHEMELFKQLLQFIADSFPEITSLLYIINNKCNDTINDLDVHVFKGKDHMFEEMEGLRFKVGPKSFYQTNSEQAYNLYKIAREFAGLTGKELVYDLYTGTGTIANFVSRQARQVIGIEYVPEAIEDAKVNAEINEIKNALFYAGDMKDMLTQEFINQHGRPDVIITDPPRAGMHQDVVDVILFAEPKRIVYVSCNPATQARDLQLLDGKYKVKAVQPVDMFPHTHHVENVVLLELR.

One can recognise a TRAM domain in the interval 1–45; the sequence is MAAEGKAIAKVNDLVIFVPYVVPGDVVDLQIKRKKNKYAEAEAVK. [4Fe-4S] cluster contacts are provided by cysteine 58, cysteine 64, cysteine 67, and cysteine 160. S-adenosyl-L-methionine-binding residues include glutamine 286, tyrosine 315, glutamate 336, and aspartate 385. Residue cysteine 412 is the Nucleophile of the active site.

This sequence belongs to the class I-like SAM-binding methyltransferase superfamily. RNA M5U methyltransferase family.

This is an uncharacterized protein from Bacteroides thetaiotaomicron (strain ATCC 29148 / DSM 2079 / JCM 5827 / CCUG 10774 / NCTC 10582 / VPI-5482 / E50).